Reading from the N-terminus, the 63-residue chain is Large ribosomal subunit protein bL28 (63 aa).

The protein belongs to the bacterial ribosomal protein bL28 family.

In Clostridium acetobutylicum (strain ATCC 824 / DSM 792 / JCM 1419 / IAM 19013 / LMG 5710 / NBRC 13948 / NRRL B-527 / VKM B-1787 / 2291 / W), this protein is Large ribosomal subunit protein bL28.